The sequence spans 204 residues: CASP-like protein 2U1 (204 aa).

The Cytoplasmic segment spans residues Met1–Lys36. Residues Gly37–Leu57 traverse the membrane as a helical segment. The Extracellular segment spans residues Lys58 to Ser84. A glycan (N-linked (GlcNAc...) asparagine) is linked at Asn77. The chain crosses the membrane as a helical span at residues Leu85–Leu105. The Cytoplasmic portion of the chain corresponds to Ser106 to Thr117. The chain crosses the membrane as a helical span at residues Val118–Ala138. Residues Ala139 to His170 lie on the Extracellular side of the membrane. Residues Phe171–Ile191 traverse the membrane as a helical segment. Over Ser192–Lys204 the chain is Cytoplasmic.

This sequence belongs to the Casparian strip membrane proteins (CASP) family. Homodimer and heterodimers.

It is found in the cell membrane. The chain is CASP-like protein 2U1 from Selaginella moellendorffii (Spikemoss).